The following is a 105-amino-acid chain: uncharacterized protein (105 aa).

A helical membrane pass occupies residues 25–47; that stretch reads AHSVTLLFGIFRSSPFLLLFLLI. The segment at 54–89 is disordered; that stretch reads GRGSQRMKKKRGRANPSENLRERADPTNGPAENGKK.

It is found in the membrane. This is an uncharacterized protein from Saccharomyces cerevisiae (strain ATCC 204508 / S288c) (Baker's yeast).